The primary structure comprises 165 residues: Basic transcription factor 3 (165 aa).

Residues 33–97 (TTDDKRLQST…PQTKKLQDIL (65 aa)) enclose the NAC-A/B domain. Over residues 120-134 (QKQASGEGNAASATI) the composition is skewed to polar residues. Residues 120–144 (QKQASGEGNAASATIQEEDDDDVPE) are disordered.

This sequence belongs to the NAC-beta family. Part of the nascent polypeptide-associated complex (NAC). Interacts with EIF(ISO)4E.

This is Basic transcription factor 3 from Arabidopsis thaliana (Mouse-ear cress).